Reading from the N-terminus, the 370-residue chain is Keratin-associated protein 10-7 (370 aa).

The tract at residues 36-363 (DCPESCCEPP…CSRPACCGPT (328 aa)) is 30 X 5 AA repeats of C-C-X(3). Tandem repeats lie at residues 41 to 45 (CCEPP), 46 to 50 (CCAPA), 67 to 71 (CCRVT), 89 to 93 (CCQQS), 99 to 103 (CCASS), 109 to 113 (CCVPV), 114 to 118 (CCKTV), 119 to 123 (CCKPV), 135 to 139 (CCQQS), 145 to 149 (CCTSS), 155 to 159 (CCVPI), 160 to 164 (CCKPV), 172 to 176 (CCQQS), 186 to 190 (CCQAV), 208 to 212 (CCQQS), 218 to 222 (CCTSS), 228 to 232 (CCVPV), 233 to 237 (CCKPV), 238 to 242 (CCVPT), 250 to 254 (CCQPA), 255 to 259 (CCTSS), 265 to 269 (CCVPV), 270 to 274 (CCKPV), 275 to 279 (CCVPV), 287 to 291 (CCQQS), 297 to 301 (CCTTS), 302 to 306 (CCRPS), 321 to 325 (CCVPV), 339 to 343 (CCRPA), and 359 to 363 (CCGPT).

It belongs to the KRTAP type 10 family. As to quaternary structure, interacts with hair keratins. As to expression, restricted to a narrow region of the hair fiber cuticle, lying approximately 20 cell layers above the apex of the dermal papilla of the hair root; not detected in any other tissues.

Its function is as follows. In the hair cortex, hair keratin intermediate filaments are embedded in an interfilamentous matrix, consisting of hair keratin-associated proteins (KRTAP), which are essential for the formation of a rigid and resistant hair shaft through their extensive disulfide bond cross-linking with abundant cysteine residues of hair keratins. The matrix proteins include the high-sulfur and high-glycine-tyrosine keratins. The protein is Keratin-associated protein 10-7 (KRTAP10-7) of Homo sapiens (Human).